Here is a 267-residue protein sequence, read N- to C-terminus: Thiazole synthase (267 aa).

The Schiff-base intermediate with DXP role is filled by lysine 101. 1-deoxy-D-xylulose 5-phosphate contacts are provided by residues glycine 162, 188–189 (AG), and 210–211 (NT). Positions 247 to 267 (HASPSSPAAGVPCLPDPEVPV) are disordered.

Belongs to the ThiG family. As to quaternary structure, homotetramer. Forms heterodimers with either ThiH or ThiS.

It is found in the cytoplasm. It carries out the reaction [ThiS sulfur-carrier protein]-C-terminal-Gly-aminoethanethioate + 2-iminoacetate + 1-deoxy-D-xylulose 5-phosphate = [ThiS sulfur-carrier protein]-C-terminal Gly-Gly + 2-[(2R,5Z)-2-carboxy-4-methylthiazol-5(2H)-ylidene]ethyl phosphate + 2 H2O + H(+). It functions in the pathway cofactor biosynthesis; thiamine diphosphate biosynthesis. Catalyzes the rearrangement of 1-deoxy-D-xylulose 5-phosphate (DXP) to produce the thiazole phosphate moiety of thiamine. Sulfur is provided by the thiocarboxylate moiety of the carrier protein ThiS. In vitro, sulfur can be provided by H(2)S. The protein is Thiazole synthase of Deinococcus geothermalis (strain DSM 11300 / CIP 105573 / AG-3a).